The following is a 225-amino-acid chain: MAIWLLCNGVLLIVAYFLGSFPTGYLLGKALQGIDIREHGSKSTGATNVLRTLGKGPGLATLGVDICKGAGAVALVRWAYGNPMFLTQAPATTNIGLWLSLVVIMAGLMAILGHSKSVWLNFTGGKSVATGLGVLLVMSWTVGLAALGIFALVVSLSRIVSLSSISAAISLPVLMFVAKEPLAYVLFSITAGVYVVWRHWANIQRLLAGTEPRLGQKKAVSTDAT.

A run of 6 helical transmembrane segments spans residues 1-21 (MAIW…LGSF), 56-76 (GPGL…VALV), 95-115 (IGLW…LGHS), 134-154 (VLLV…ALVV), 159-178 (IVSL…MFVA), and 182-201 (LAYV…RHWA).

Belongs to the PlsY family. As to quaternary structure, probably interacts with PlsX.

The protein resides in the cell inner membrane. The catalysed reaction is an acyl phosphate + sn-glycerol 3-phosphate = a 1-acyl-sn-glycero-3-phosphate + phosphate. Its pathway is lipid metabolism; phospholipid metabolism. In terms of biological role, catalyzes the transfer of an acyl group from acyl-phosphate (acyl-PO(4)) to glycerol-3-phosphate (G3P) to form lysophosphatidic acid (LPA). This enzyme utilizes acyl-phosphate as fatty acyl donor, but not acyl-CoA or acyl-ACP. The protein is Glycerol-3-phosphate acyltransferase of Acaryochloris marina (strain MBIC 11017).